The sequence spans 231 residues: MNKKTKRMKKIKEHINFEKLHHIDETIDLLKKSSTVKFNESIDIAINLGINSKKSDQNIRSSTVLPNGIGRSIRVAVFTQGDNIAIAKDAGAELIGMEDLSEKIKKEGVDFDVVIATPDAMKIVTQLGQILGPRNLMPNTKLGTITTNIAEAIKNAKTGQVRYRNDKNGIIHATIGRINFHKNEIKENLNVFLESIKKAKPPQSKGIYIKKIVLSTTMGVGLMVDQSTLSL.

This sequence belongs to the universal ribosomal protein uL1 family. As to quaternary structure, part of the 50S ribosomal subunit.

Functionally, binds directly to 23S rRNA. The L1 stalk is quite mobile in the ribosome, and is involved in E site tRNA release. Its function is as follows. Protein L1 is also a translational repressor protein, it controls the translation of the L11 operon by binding to its mRNA. The sequence is that of Large ribosomal subunit protein uL1 from Buchnera aphidicola subsp. Acyrthosiphon pisum (strain 5A).